Consider the following 214-residue polypeptide: Small ribosomal subunit protein uS3c (214 aa).

The KH type-2 domain occupies I39–E111.

The protein belongs to the universal ribosomal protein uS3 family. As to quaternary structure, part of the 30S ribosomal subunit.

The protein localises to the plastid. It localises to the chloroplast. The chain is Small ribosomal subunit protein uS3c (rps3) from Trieres chinensis (Marine centric diatom).